A 315-amino-acid chain; its full sequence is Porphobilinogen deaminase (315 aa).

An S-(dipyrrolylmethanemethyl)cysteine modification is found at cysteine 234.

It belongs to the HMBS family. As to quaternary structure, monomer. Requires dipyrromethane as cofactor.

It carries out the reaction 4 porphobilinogen + H2O = hydroxymethylbilane + 4 NH4(+). The protein operates within porphyrin-containing compound metabolism; protoporphyrin-IX biosynthesis; coproporphyrinogen-III from 5-aminolevulinate: step 2/4. Its function is as follows. Tetrapolymerization of the monopyrrole PBG into the hydroxymethylbilane pre-uroporphyrinogen in several discrete steps. This chain is Porphobilinogen deaminase, found in Mycobacterium avium (strain 104).